The chain runs to 61 residues: Alpha-conotoxin-like Sm1.1 (61 aa).

The N-terminal stretch at 1-16 (MFTVFLLVVLATTVVS) is a signal peptide. A propeptide spanning residues 17-43 (FPSDRASDGRDDEAKDERSDMHESGRK) is cleaved from the precursor. The tract at residues 19–46 (SDRASDGRDDEAKDERSDMHESGRKGRG) is disordered. Positions 21–42 (RASDGRDDEAKDERSDMHESGR) are enriched in basic and acidic residues. Disulfide bonds link cysteine 48/cysteine 53 and cysteine 49/cysteine 59. Proline 55 is subject to 4-hydroxyproline; partial. Position 59 is a cysteine amide (cysteine 59).

Belongs to the conotoxin A superfamily. As to expression, expressed by the venom duct.

Its subcellular location is the secreted. Alpha-conotoxins act on postsynaptic membranes, they bind to the nicotinic acetylcholine receptors (nAChR) and thus inhibit them. This is Alpha-conotoxin-like Sm1.1 from Conus stercusmuscarum (Fly-specked cone).